Consider the following 2347-residue polypeptide: MKNIYCLIPKLVNFATLGCLWISVVQCTVLNSCLKSCVTNLGQQLDLGTPHNLSEPCIQGCHFWNSVDQKNCALKCRESCEVGCSSAEGAYEEEVLENADLPTAPFASSIGSHNMTLRWKSANFSGVKYIIQWKYAQLLGSWTYTKTVSRPSYVVKPLHPFTEYIFRVVWIFTAQLQLYSPPSPSYRTHPHGVPETAPLIRNIESSSPDTVEVSWDPPQFPGGPILGYNLRLISKNQKLDAGTQRTSFQFYSTLPNTIYRFSIAAVNEVGEGPEAESSITTSSSAVQQEEQWLFLSRKTSLRKRSLKHLVDEAHCLRLDAIYHNITGISVDVHQQIVYFSEGTLIWAKKAANMSDVSDLRIFYRGSGLISSISIDWLYQRMYFIMDELVCVCDLENCSNIEEITPPSISAPQKIVADSYNGYVFYLLRDGIYRADLPVPSGRCAEAVRIVESCTLKDFAIKPQAKRIIYFNDTAQVFMSTFLDGSASHLILPRIPFADVKSFACENNDFLVTDGKVIFQQDALSFNEFIVGCDLSHIEEFGFGNLVIFGSSSQLHPLPGRPQELSVLFGSHQALVQWKPPALAIGANVILISDIIELFELGPSAWQNWTYEVKVSTQDPPEVTHIFLNISGTMLNVPELQSAMKYKVSVRASSPKRPGPWSEPSVGTTLVPASEPPFIMAVKEDGLWSKPLNSFGPGEFLSSDIGNVSDMDWYNNSLYYSDTKGDVFVWLLNGTDISENYHLPSIAGAGALAFEWLGHFLYWAGKTYVIQRQSVLTGHTDIVTHVKLLVNDMVVDSVGGYLYWTTLYSVESTRLNGESSLVLQTQPWFSGKKVIALTLDLSDGLLYWLVQDSQCIHLYTAVLRGQSTGDTTITEFAAWSTSEISQNALMYYSGRLFWINGFRIITTQEIGQKTSVSVLEPARFNQFTIIQTSLKPLPGNFSFTPKVIPDSVQESSFRIEGNASSFQILWNGPPAVDWGVVFYSVEFSAHSKFLASEQHSLPVFTVEGLEPYALFNLSVTPYTYWGKGPKTSLSLRAPETVPSAPENPRIFILPSGKCCNKNEVVVEFRWNKPKHENGVLTKFEIFYNISNQSITNKTCEDWIAVNVTPSVMSFQLEGMSPRCFIAFQVRAFTSKGPGPYADVVKSTTSEINPFPHLITLLGNKIVFLDMDQNQVVWTFSAERVISAVCYTADNEMGYYAEGDSLFLLHLHNRSSSELFQDSLVFDITVITIDWISRHLYFALKESQNGMQVFDVDLEHKVKYPREVKIHNRNSTIISFSVYPLLSRLYWTEVSNFGYQMFYYSIISHTLHRILQPTATNQQNKRNQCSCNVTEFELSGAMAIDTSNLEKPLIYFAKAQEIWAMDLEGCQCWRVITVPAMLAGKTLVSLTVDGDLIYWIITAKDSTQIYQAKKGNGAIVSQVKALRSRHILAYSSVMQPFPDKAFLSLASDTVEPTILNATNTSLTIRLPLAKTNLTWYGITSPTPTYLVYYAEVNDRKNSSDLKYRILEFQDSIALIEDLQPFSTYMIQIAVKNYYSDPLEHLPPGKEIWGKTKNGVPEAVQLINTTVRSDTSLIISWRESHKPNGPKESVRYQLAISHLALIPETPLRQSEFPNGRLTLLVTRLSGGNIYVLKVLACHSEEMWCTESHPVTVEMFNTPEKPYSLVPENTSLQFNWKAPLNVNLIRFWVELQKWKYNEFYHVKTSCSQGPAYVCNITNLQPYTSYNVRVVVVYKTGENSTSLPESFKTKAGVPNKPGIPKLLEGSKNSIQWEKAEDNGCRITYYILEIRKSTSNNLQNQNLRWKMTFNGSCSSVCTWKSKNLKGIFQFRVVAANNLGFGEYSGISENIILVGDDFWIPETSFILTIIVGIFLVVTIPLTFVWHRRLKNQKSAKEGVTVLINEDKELAELRGLAAGVGLANACYAIHTLPTQEEIENLPAFPREKLTLRLLLGSGAFGEVYEGTAVDILGVGSGEIKVAVKTLKKGSTDQEKIEFLKEAHLMSKFNHPNILKQLGVCLLNEPQYIILELMEGGDLLTYLRKARMATFYGPLLTLVDLVDLCVDISKGCVYLERMHFIHRDLAARNCLVSVKDYTSPRIVKIGDFGLARDIYKNDYYRKRGEGLLPVRWMAPESLMDGIFTTQSDVWSFGILIWEILTLGHQPYPAHSNLDVLNYVQTGGRLEPPRNCPDDLWNLMTQCWAQEPDQRPTFHRIQDQLQLFRNFFLNSIYKSRDEANNSGVINESFEGEDGDVICLNSDDIMPVALMETKNREGLNYMVLATECGQGEEKSEGPLGSQESESCGLRKEEKEPHADKDFCQEKQVAYCPSGKPEGLNYACLTHSGYGDGSD.

The N-terminal stretch at 1 to 27 (MKNIYCLIPKLVNFATLGCLWISVVQC) is a signal peptide. The Extracellular segment spans residues 28–1859 (TVLNSCLKSC…LVGDDFWIPE (1832 aa)). Residues Asn-52, Asn-114, and Asn-123 are each glycosylated (N-linked (GlcNAc...) asparagine). Fibronectin type-III domains are found at residues 101-196 (LPTA…VPET) and 197-285 (APLI…SSSA). N-linked (GlcNAc...) asparagine glycosylation is found at Asn-324, Asn-352, Asn-396, Asn-471, Asn-607, Asn-628, Asn-706, Asn-714, Asn-732, Asn-939, Asn-961, Asn-1015, Asn-1087, Asn-1090, Asn-1095, Asn-1211, Asn-1272, Asn-1330, Asn-1458, Asn-1461, Asn-1474, Asn-1499, Asn-1565, Asn-1669, Asn-1715, Asn-1738, and Asn-1808. The 115-residue stretch at 557 to 671 (LPGRPQELSV…EPSVGTTLVP (115 aa)) folds into the Fibronectin type-III 3 domain. 2 Fibronectin type-III domains span residues 947-1042 (IPDS…TVPS) and 1043-1150 (APEN…TSEI). Fibronectin type-III domains lie at 1450–1556 (DTVE…TKNG), 1557–1656 (VPEA…VEMF), 1658–1751 (TPEK…TKAG), and 1752–1854 (VPNK…VGDD). The chain crosses the membrane as a helical span at residues 1860–1882 (TSFILTIIVGIFLVVTIPLTFVW). The Cytoplasmic portion of the chain corresponds to 1883–2347 (HRRLKNQKSA…THSGYGDGSD (465 aa)). In terms of domain architecture, Protein kinase spans 1945-2222 (LTLRLLLGSG…DQLQLFRNFF (278 aa)). ATP is bound by residues 1951-1959 (LGSGAFGEV) and Lys-1980. Asp-2079 (proton acceptor) is an active-site residue. Position 2274 is a phosphotyrosine; by autocatalysis (Tyr-2274). Residues 2284–2311 (GEEKSEGPLGSQESESCGLRKEEKEPHA) form a disordered region. Basic and acidic residues predominate over residues 2301–2311 (GLRKEEKEPHA). Phosphotyrosine; by autocatalysis is present on Tyr-2334.

Belongs to the protein kinase superfamily. Tyr protein kinase family. Insulin receptor subfamily. In terms of assembly, interacts with PTPN6 (via SH2 1 domain); the interaction is direct and promotes ROS1 dephosphorylation. Interacts with PTPN11; may activate the PI3 kinase-mTOR signaling pathway. Interacts with VAV3; constitutive interaction mediating VAV3 phosphorylation. Phosphorylated. Probably autophosphorylates. Phosphorylation at Tyr-2274 is required for the interaction with PTPN6 that mediates ROS1 dephosphorylation. Phosphorylation at Tyr-2274 stimulates the kinase activity and the activation of the ERK1 signaling cascade. Phosphorylation at Tyr-2274 and/or Tyr-2334 recruits PTPN11. Expressed in brain. Expression is increased in primary gliomas.

The protein localises to the cell membrane. The enzyme catalyses L-tyrosyl-[protein] + ATP = O-phospho-L-tyrosyl-[protein] + ADP + H(+). Inhibited by dephosphorylation by PTPN6. Its function is as follows. Receptor tyrosine kinase (RTK) that plays a role in epithelial cell differentiation and regionalization of the proximal epididymal epithelium. NELL2 is an endogenous ligand for ROS1. Upon endogenous stimulation by NELL2, ROS1 activates the intracellular signaling pathway and triggers epididymal epithelial differentiation and subsequent sperm maturation. May activate several downstream signaling pathways related to cell differentiation, proliferation, growth and survival including the PI3 kinase-mTOR signaling pathway. Mediates the phosphorylation of PTPN11, an activator of this pathway. May also phosphorylate and activate the transcription factor STAT3 to control anchorage-independent cell growth. Mediates the phosphorylation and the activation of VAV3, a guanine nucleotide exchange factor regulating cell morphology. May activate other downstream signaling proteins including AKT1, MAPK1, MAPK3, IRS1 and PLCG2. The polypeptide is Proto-oncogene tyrosine-protein kinase ROS (ROS1) (Homo sapiens (Human)).